Reading from the N-terminus, the 364-residue chain is Transcription factor SPEECHLESS (364 aa).

Residues 35–109 (GEISPTAAST…QKMSHVTVER (75 aa)) form a disordered region. Phosphoserine; by ASK7 is present on Ser-38. Position 40 is a phosphothreonine; by ASK7 (Thr-40). Residues 40 to 53 (TAASTPKDGTTSSK) are compositionally biased toward polar residues. Position 43 is a phosphoserine; by ASK7 (Ser-43). Thr-44 is modified (phosphothreonine; by ASK7). Ser-65 bears the Phosphoserine; by ASK7 mark. The segment covering 79-92 (EDEEEEDGDGEAEE) has biased composition (acidic residues). Residues 99–112 (QQKMSHVTVERNRR) are basic motif. The bHLH domain occupies 99 to 150 (QQKMSHVTVERNRRKQMNEHLTVLRSLMPCFYVKRGDQASIIGGVVEYISEL). The interval 113 to 150 (KQMNEHLTVLRSLMPCFYVKRGDQASIIGGVVEYISEL) is helix-loop-helix motif. Ser-171 is subject to Phosphoserine; by ASK7. The disordered stretch occupies residues 171–227 (SPRVVPSPRPSPPVLSPRKPPLSPRINHHQIHHHLLLPPISPRTPQPTSPYRAIPPQ). The span at 175–193 (VPSPRPSPPVLSPRKPPLS) shows a compositional bias: pro residues. At Ser-177 the chain carries Phosphoserine; by ASK7, MPK3 and MPK6. Ser-181 carries the phosphoserine; by ASK7 modification. At Ser-186 the chain carries Phosphoserine; by CDKA-1, ASK7, MPK3 and MPK6. A Phosphoserine; by MPK3 and MPK6 modification is found at Ser-193. The segment covering 196-205 (INHHQIHHHL) has biased composition (basic residues). The span at 209–218 (PISPRTPQPT) shows a compositional bias: pro residues. Position 211 is a phosphoserine; by MPK3 and MPK6 (Ser-211). A Phosphothreonine; by ASK7, MPK3 and MPK6 modification is found at Thr-214. At Ser-219 the chain carries Phosphoserine; by ASK7, MPK3 and MPK6.

In terms of assembly, homodimer. Forms dimers with SCRM and SCRM2. May interact with CDKA-1. Post-translationally, phosphorylated by ASK7/BIN2 and ASK3/SK12; this post-translational modification inhibits activity and limit epidermal cell proliferation. Phosphorylation by MPK3 and MPK6 leads to the inhibition of stomatal fate and to degradation. Stabilized by CDKA-1-mediated phosphorylation at Ser-186 which promotes stomatal development. As to expression, expressed in developing leaf epidermis. Reduced accumulation in the stomatal lineage ground cells (SLGCs) where BASL is polarized in the cell cortex. Observed in small cells of non-protruding hypocotyl cell files and of developing cotyledon epidermis. Restricted to meristemoids (stomatal precursor cell) in leaves epidermis, mostly in dividing cells of non-protruding cell files.

It localises to the nucleus. With respect to regulation, negatively regulated through phosphorylation by the MAPK module. Activity is constrained by polarized BASL in stomatal lineage ground cells (SLGCs) undergoing ACD. Transcription factor acting as an integration node for stomata and brassinosteroid (BR) signaling pathways to control stomatal initiation and development. Activates transcription when in the presence of SCRM/ICE1. Functions as a dimer with SCRM or SCRM2 during stomatal initiation. Required for the initiation, the spacing and the formation of stomata, by promoting the first asymmetric cell divisions. Together with FMA and MUTE, modulates the stomata formation. Involved in the regulation of growth reduction under osmotic stress (e.g. mannitol), associated with a quick decrease of meristemoid mother cells (MMCs) number lower stomatal index and density. In Arabidopsis thaliana (Mouse-ear cress), this protein is Transcription factor SPEECHLESS.